A 196-amino-acid chain; its full sequence is Recombination protein RecR (196 aa).

The segment at 57–72 (CERCHTFTEGAVCETC) adopts a C4-type zinc-finger fold. A Toprim domain is found at 80 to 175 (TRLCVVETPA…HVTRLARGVP (96 aa)).

This sequence belongs to the RecR family.

Functionally, may play a role in DNA repair. It seems to be involved in an RecBC-independent recombinational process of DNA repair. It may act with RecF and RecO. The sequence is that of Recombination protein RecR from Acidovorax sp. (strain JS42).